Consider the following 146-residue polypeptide: MGAFTEKQEALVNSSWEAFKGNIPQYSVVFYTSILEKAPAAKNLFSFLANGVDPTNPKLTAHAESLFGLVRDSAAQLRANGAVVADAALGSIHSQKGVNDSQFLVVKEALLKTLKEAVGDKWTDELSTALELAYDELAAAIKKAYA.

Residues alanine 3–alanine 146 enclose the Globin domain. 2 positions are modified to nitrated tyrosine: tyrosine 26 and tyrosine 31. Serine 46 contributes to the heme b binding site. Serine 46 is modified (phosphoserine). O2 is bound at residue histidine 62. 2 residues coordinate heme b: histidine 93 and lysine 96. Tyrosine 134 is modified (nitrated tyrosine).

Belongs to the plant globin family. As to quaternary structure, monomer. Post-translationally, nitrated mainly at Tyr-31 and, to a lower extent, at Tyr-26 and Tyr-134, in effective nodules and particularly in hypoxic conditions; this mechanism may play a protective role in the symbiosis by buffering toxic peroxynitrite NO(2)(-). Nitration level decrease during nodule senescence. Phosphorylation at Ser-46 disrupts the molecular environment of its porphyrin ring oxygen binding pocket, thus leading to a reduced oxygen consumption and to the delivery of oxygen O(2) to symbiosomes. As to expression, root nodules.

The protein resides in the cytoplasm. Its subcellular location is the cytosol. The protein localises to the nucleus. Leghemoglobin that reversibly binds oxygen O(2) through a pentacoordinated heme iron. In root nodules, facilitates the diffusion of oxygen to the bacteroids while preventing the bacterial nitrogenase from being inactivated by buffering dioxygen, nitric oxide and carbon monoxide, and promoting the formation of reactive oxygen species (ROS, e.g. H(2)O(2)). This role is essential for symbiotic nitrogen fixation (SNF). This Phaseolus vulgaris (Kidney bean) protein is Leghemoglobin alpha.